A 256-amino-acid polypeptide reads, in one-letter code: Type III pantothenate kinase 1 (256 aa).

6 to 13 (DIGNSHIF) is a binding site for ATP. Residue 107 to 110 (GADR) participates in substrate binding. D109 serves as the catalytic Proton acceptor. Residue D130 coordinates K(+). T133 is a binding site for ATP. Substrate is bound at residue T185.

This sequence belongs to the type III pantothenate kinase family. As to quaternary structure, homodimer. It depends on NH4(+) as a cofactor. The cofactor is K(+).

It is found in the cytoplasm. It carries out the reaction (R)-pantothenate + ATP = (R)-4'-phosphopantothenate + ADP + H(+). The protein operates within cofactor biosynthesis; coenzyme A biosynthesis; CoA from (R)-pantothenate: step 1/5. Functionally, catalyzes the phosphorylation of pantothenate (Pan), the first step in CoA biosynthesis. In Francisella tularensis subsp. holarctica (strain LVS), this protein is Type III pantothenate kinase 1.